Reading from the N-terminus, the 213-residue chain is Flagellar transcriptional regulator FlhC (213 aa).

Zn(2+) contacts are provided by Cys138, Cys141, Cys158, and Cys161.

It belongs to the FlhC family. In terms of assembly, heterohexamer composed of two FlhC and four FlhD subunits. Each FlhC binds a FlhD dimer, forming a heterotrimer, and a hexamer assembles by dimerization of two heterotrimers. Requires Zn(2+) as cofactor.

The protein localises to the cytoplasm. Functionally, functions in complex with FlhD as a master transcriptional regulator that regulates transcription of several flagellar and non-flagellar operons by binding to their promoter region. Activates expression of class 2 flagellar genes, including fliA, which is a flagellum-specific sigma factor that turns on the class 3 genes. Also regulates genes whose products function in a variety of physiological pathways. This is Flagellar transcriptional regulator FlhC from Cupriavidus metallidurans (strain ATCC 43123 / DSM 2839 / NBRC 102507 / CH34) (Ralstonia metallidurans).